We begin with the raw amino-acid sequence, 128 residues long: Putative histidinol dehydrogenase (128 aa).

A disordered region spans residues 21 to 84; the sequence is QRPDIAPRHH…EGQEKASGRR (64 aa). Composition is skewed to basic and acidic residues over residues 34-50 and 72-81; these read HRAEREAVEADRSRRTA and QGREGQEKAS.

It belongs to the histidinol dehydrogenase family.

It carries out the reaction L-histidinol + 2 NAD(+) + H2O = L-histidine + 2 NADH + 3 H(+). It participates in amino-acid biosynthesis; L-histidine biosynthesis; L-histidine from 5-phospho-alpha-D-ribose 1-diphosphate: step 9/9. Its function is as follows. Catalyzes the sequential NAD-dependent oxidations of L-histidinol to L-histidinaldehyde and then to L-histidine. The chain is Putative histidinol dehydrogenase (hisD) from Azospirillum brasilense.